Reading from the N-terminus, the 190-residue chain is FUN14 domain-containing protein 2 (190 aa).

Polar residues predominate over residues 1-13; sequence METSTQRTGSHLA. The segment at 1-31 is disordered; that stretch reads METSTQRTGSHLAQTAAARHSASSRGEAARV. Topologically, residues 1 to 81 are cytoplasmic; that stretch reads METSTQRTGS…GQESGPSAEK (81 aa). Ser10 and Ser54 each carry phosphoserine. The chain crosses the membrane as a helical span at residues 82 to 102; it reads YSVATQLLIGGVTGWCTGFIF. The Mitochondrial intermembrane segment spans residues 103–108; that stretch reads QKVGKL. The helical transmembrane segment at 109 to 129 threads the bilayer; that stretch reads AATAVGGGFFLLQLANHTGYI. Topologically, residues 130 to 165 are cytoplasmic; it reads KVDWQRVEKDMKKAKEQLKIRKSNQIPTEVKSKAEE. Ser152 is modified (phosphoserine). A helical transmembrane segment spans residues 166 to 186; that stretch reads VVSFVKKNVLVTGGFFGGFLL. Over 187-190 the chain is Mitochondrial intermembrane; sequence GMAS.

Belongs to the FUN14 family.

The protein localises to the mitochondrion outer membrane. The protein resides in the nucleus. In terms of biological role, binds directly and specifically 1,2-Diacyl-sn-glycero-3-phospho-(1'-myo-inositol-3',4',5'-bisphosphate) (PIP3) leading to the recruitment of PIP3 to mitochondria and may play a role in the regulation of the platelet activation via AKT/GSK3B/cGMP signaling pathways. May act as transcription factor that regulates SREBP1 (isoform SREBP-1C) expression in order to modulate triglyceride (TG) homeostasis in hepatocytes. This is FUN14 domain-containing protein 2 from Bos taurus (Bovine).